The following is a 588-amino-acid chain: 2-isopropylmalate synthase (588 aa).

The 275-residue stretch at 40-314 folds into the Pyruvate carboxyltransferase domain; sequence PRWCAVDLRD…DPQIDFSDLD (275 aa). 4 residues coordinate Mg(2+): aspartate 49, histidine 253, histidine 255, and asparagine 289. The regulatory domain stretch occupies residues 456 to 588; that stretch reads APLDRVEEKW…TVREPELAAV (133 aa).

The protein belongs to the alpha-IPM synthase/homocitrate synthase family. LeuA type 2 subfamily. As to quaternary structure, homodimer. Mg(2+) is required as a cofactor.

It is found in the cytoplasm. The enzyme catalyses 3-methyl-2-oxobutanoate + acetyl-CoA + H2O = (2S)-2-isopropylmalate + CoA + H(+). The protein operates within amino-acid biosynthesis; L-leucine biosynthesis; L-leucine from 3-methyl-2-oxobutanoate: step 1/4. Its function is as follows. Catalyzes the condensation of the acetyl group of acetyl-CoA with 3-methyl-2-oxobutanoate (2-ketoisovalerate) to form 3-carboxy-3-hydroxy-4-methylpentanoate (2-isopropylmalate). This is 2-isopropylmalate synthase from Clavibacter sepedonicus (Clavibacter michiganensis subsp. sepedonicus).